The chain runs to 256 residues: Probable succinate transporter subunit YjjP (256 aa).

The Cytoplasmic portion of the chain corresponds to 1–113 (MQTEQQRAVT…KRFSQIQPLR (113 aa)). Residues 114–135 (YPRWLVALMVGLSCACFCKLNN) traverse the membrane as a helical segment. Topologically, residues 136-140 (GGWDG) are periplasmic. The chain crosses the membrane as a helical span at residues 141 to 158 (AVITFFASTTAMYIRQLL). Topologically, residues 159-168 (AQRHLHPQIN) are cytoplasmic. Residues 169-189 (FCLTAFAATTISGLLLQLPTF) form a helical membrane-spanning segment. Residues 190 to 194 (SNTPT) lie on the Periplasmic side of the membrane. A helical transmembrane segment spans residues 195–215 (IAMAASVLLLVPGFPLINAVA). Over 216 to 228 (DMFKGHINTGLAR) the chain is Cytoplasmic. The helical transmembrane segment at 229–249 (WAIASLLTLATCVGVVMALTI) threads the bilayer. The Periplasmic portion of the chain corresponds to 250–256 (WGLRGWV).

This sequence belongs to the ThrE exporter (TC 2.A.79) family. The transporter is composed of YjjB and YjjP.

Its subcellular location is the cell inner membrane. Involved in succinate export with YjjB. Both proteins are required for export. Contributes to succinate production under both aerobic and anaerobic conditions. The chain is Probable succinate transporter subunit YjjP (yjjP) from Escherichia coli (strain K12).